Here is a 343-residue protein sequence, read N- to C-terminus: Flavonoid 3'-O-methyltransferase FOMT (343 aa).

Residues glycine 184, aspartate 207, aspartate 227, methionine 228, methionine 240, and lysine 241 each coordinate S-adenosyl-L-homocysteine. Histidine 245 (proton acceptor) is an active-site residue. Active-site residues include glutamate 273 and glutamate 305.

This sequence belongs to the class I-like SAM-binding methyltransferase superfamily. Cation-independent O-methyltransferase family. Homodimer.

The enzyme catalyses 3',5-dihydroxy-3,4',7-trimethoxyflavone + S-adenosyl-L-methionine = 5-hydroxy-3,7,3',4'-tetramethoxyflavone + S-adenosyl-L-homocysteine + H(+). It participates in flavonoid metabolism. Its activity is regulated as follows. Inhibited by nickel (NiCl(2) and NiSO(4)) and para-chloromercuribenzoate. Its function is as follows. Catalyzes the 3'- or 5'-O-methylation of partially methylated flavonols, but does not accept quercetin or caffeate as substrates for methylation. The chain is Flavonoid 3'-O-methyltransferase FOMT from Chrysosplenium americanum (American golden saxifrage).